Here is a 42-residue protein sequence, read N- to C-terminus: Potassium channel toxin gamma-KTx 1.2 (42 aa).

4 disulfides stabilise this stretch: C5-C23, C11-C34, C20-C39, and C24-C41.

Belongs to the ergtoxin family. Gamma-KTx 1 subfamily. As to expression, expressed by the venom gland.

Its subcellular location is the secreted. Its function is as follows. Blocks Kv11/ERG potassium channels. The sequence is that of Potassium channel toxin gamma-KTx 1.2 from Centruroides elegans (Bark scorpion).